A 262-amino-acid polypeptide reads, in one-letter code: Hydroxyethylthiazole kinase (262 aa).

M50 is a binding site for substrate. R125 and T171 together coordinate ATP. Residue G198 coordinates substrate.

The protein belongs to the Thz kinase family. Requires Mg(2+) as cofactor.

The catalysed reaction is 5-(2-hydroxyethyl)-4-methylthiazole + ATP = 4-methyl-5-(2-phosphooxyethyl)-thiazole + ADP + H(+). It functions in the pathway cofactor biosynthesis; thiamine diphosphate biosynthesis; 4-methyl-5-(2-phosphoethyl)-thiazole from 5-(2-hydroxyethyl)-4-methylthiazole: step 1/1. In terms of biological role, catalyzes the phosphorylation of the hydroxyl group of 4-methyl-5-beta-hydroxyethylthiazole (THZ). The polypeptide is Hydroxyethylthiazole kinase (Escherichia coli O81 (strain ED1a)).